A 38-amino-acid chain; its full sequence is Lebetin-2-alpha (38 aa).

A disordered region spans residues 1–38; that stretch reads GDNKPPKKGPPNGCFGHKIDRIGSHSGLGCNKVDDNKG. A disulfide bond links C14 and C30.

Belongs to the natriuretic peptide family. In terms of tissue distribution, expressed by the venom gland.

Its subcellular location is the secreted. Functionally, inhibits platelet aggregation induced by thrombin, collagen and PAF-acether. Human platelet aggregation induced by thrombin is inhibited by synthetic lebetin-1-alpha with (IC(50)=140 nM). In vivo, inhibits collagen-induced thrombocytopenia in rats. Is not toxic upon intravenous injection into mice and rats. Its function is as follows. Inhibits platelet aggregation induced by thrombin, collagen and PAF-acether. Human platelet aggregation induced by thrombin is inhibited by synthetic lebetin-1-beta with (IC(50)=32 nM). In vivo, inhibits collagen-induced thrombocytopenia in rats. Is not toxic upon intravenous injection into mice and rats. In terms of biological role, inhibits platelet aggregation induced by thrombin, collagen and PAF-acether. Human platelet aggregation induced by thrombin is inhibited by synthetic lebetin-1-gamma with (IC(50)=5 nM). In vivo, inhibits collagen-induced thrombocytopenia in rats. Is not toxic upon intravenous injection into mice and rats. Inhibits platelet aggregation induced by thrombin, collagen and PAF-acether. Human platelet aggregation induced by thrombin is inhibited by synthetic lebetin-1-alpha with (IC(50)=2.5 nM). In vivo, inhibits collagen-induced thrombocytopenia in rats. Is not toxic upon intravenous injection into mice and rats. Functionally, inhibits platelet aggregation induced by thrombin, collagen and PAF-acether. Human platelet aggregation induced by thrombin is inhibited by synthetic lebetin-1-alpha with (IC(50)=2.8 nM). In vivo, inhibits collagen-induced thrombocytopenia in rats. Is not toxic upon intravenous injection into mice and rats. This is Lebetin-2-alpha from Macrovipera lebetinus (Levantine viper).